Reading from the N-terminus, the 365-residue chain is Chorismate synthase (365 aa).

A disordered region spans residues I41–E61. R48 is an NADP(+) binding site. Residues R125–S127, G285, K300–S304, and R327 contribute to the FMN site.

The protein belongs to the chorismate synthase family. FMNH2 serves as cofactor.

The catalysed reaction is 5-O-(1-carboxyvinyl)-3-phosphoshikimate = chorismate + phosphate. Its pathway is metabolic intermediate biosynthesis; chorismate biosynthesis; chorismate from D-erythrose 4-phosphate and phosphoenolpyruvate: step 7/7. Its function is as follows. Catalyzes the anti-1,4-elimination of the C-3 phosphate and the C-6 proR hydrogen from 5-enolpyruvylshikimate-3-phosphate (EPSP) to yield chorismate, which is the branch point compound that serves as the starting substrate for the three terminal pathways of aromatic amino acid biosynthesis. This reaction introduces a second double bond into the aromatic ring system. This chain is Chorismate synthase, found in Methanosarcina barkeri (strain Fusaro / DSM 804).